A 1007-amino-acid chain; its full sequence is uncharacterized protein (1007 aa).

Residues Met1–Ala51 form the signal peptide. The span at Met1 to Ala96 shows a compositional bias: low complexity. Disordered stretches follow at residues Met1–Ile186, Thr200–Pro224, Asn387–Ile533, Thr543–Asn562, Glu578–Ile645, Thr655–Asn674, and Asp712–Ile757. The span at Asp118 to Thr163 shows a compositional bias: polar residues. Positions His167 to Glu176 are enriched in basic and acidic residues. 2 stretches are compositionally biased toward polar residues: residues Ser177 to Ile186 and Thr200 to Ile210. Positions Val423–Val442 are enriched in low complexity. The segment covering Ser443–Gln453 has biased composition (polar residues). Low complexity predominate over residues Ile469–Ser491. The segment covering Asp507–Glu523 has biased composition (polar residues). Acidic residues predominate over residues Ala597–Ser618. Residues Asp619–Glu635 are compositionally biased toward low complexity. Residues Asp712–Ser730 are compositionally biased toward acidic residues. Residues Thr732–Asn743 show a composition bias toward polar residues.

The protein belongs to the chlamydial CPn_0572/CT_456/TC_0741 family.

This is an uncharacterized protein from Chlamydia muridarum (strain MoPn / Nigg).